A 542-amino-acid polypeptide reads, in one-letter code: Zinc finger protein 280A (542 aa).

The disordered stretch occupies residues 66–185 (VTPGSNSRRK…RDSKRVKLRD (120 aa)). Residues 107-122 (EGRSTDSPVTMKSSSE) show a composition bias toward polar residues. Over residues 128 to 143 (SSPQVVSPSSSDSLPP) the composition is skewed to low complexity. The segment covering 161–185 (SSPDSKRLSTSDINSRDSKRVKLRD) has biased composition (basic and acidic residues). C2H2-type zinc fingers lie at residues 334 to 357 (TTCQ…DSVH), 364 to 387 (AVCK…KDHH), 423 to 445 (LLCL…CWRH), and 451 to 474 (LQCS…TKDH). Residues 499–520 (QPGSSGMASVIVSNTDPQSSPV) show a composition bias toward polar residues. Residues 499-542 (QPGSSGMASVIVSNTDPQSSPVKTKKKTAMNTRDSRLPCSKDSS) form a disordered region.

It is found in the nucleus. May function as a transcription factor. In Homo sapiens (Human), this protein is Zinc finger protein 280A (ZNF280A).